A 610-amino-acid chain; its full sequence is NTPase KAP family P-loop domain-containing protein 1 (610 aa).

The region spanning 1-414 is the KAP NTPase domain; it reads MQQEAAQRES…NTVPITVRLL (414 aa). The next 3 membrane-spanning stretches (helical) occupy residues 22–42, 118–138, and 157–177; these read AVSGWGVPQLLWYLVFLQPII, VCLGLLALLAALGLGVGLLYL, and VFGGAATTLSGSGLLMAVYSV. Residues 540 to 587 are disordered; it reads ALKPPSPPKSPTRDTPHAAHRANSASRAPPSGRASGQAGEGHHTGDLA. A compositionally biased stretch (low complexity) spans 560 to 575; that stretch reads RANSASRAPPSGRASG.

The protein resides in the membrane. The sequence is that of NTPase KAP family P-loop domain-containing protein 1 (NKPD1) from Homo sapiens (Human).